The sequence spans 346 residues: UDP-N-acetylenolpyruvoylglucosamine reductase (346 aa).

Residues 18–189 (LRAQARAFIA…VSVVFALKTH (172 aa)) enclose the FAD-binding PCMH-type domain. Arg165 is a catalytic residue. Ser240 (proton donor) is an active-site residue. Glu336 is an active-site residue.

The protein belongs to the MurB family. It depends on FAD as a cofactor.

Its subcellular location is the cytoplasm. It catalyses the reaction UDP-N-acetyl-alpha-D-muramate + NADP(+) = UDP-N-acetyl-3-O-(1-carboxyvinyl)-alpha-D-glucosamine + NADPH + H(+). It functions in the pathway cell wall biogenesis; peptidoglycan biosynthesis. Cell wall formation. This Neisseria meningitidis serogroup A / serotype 4A (strain DSM 15465 / Z2491) protein is UDP-N-acetylenolpyruvoylglucosamine reductase.